We begin with the raw amino-acid sequence, 104 residues long: Small ribosomal subunit protein uS10 (104 aa).

The protein belongs to the universal ribosomal protein uS10 family. In terms of assembly, part of the 30S ribosomal subunit.

Functionally, involved in the binding of tRNA to the ribosomes. The chain is Small ribosomal subunit protein uS10 from Dichelobacter nodosus (strain VCS1703A).